Reading from the N-terminus, the 256-residue chain is Hydroxyacylglutathione hydrolase (256 aa).

Residues His-57, His-59, Asp-61, His-62, His-115, Asp-134, and His-172 each coordinate Zn(2+).

Belongs to the metallo-beta-lactamase superfamily. Glyoxalase II family. Monomer. It depends on Zn(2+) as a cofactor.

It catalyses the reaction an S-(2-hydroxyacyl)glutathione + H2O = a 2-hydroxy carboxylate + glutathione + H(+). It functions in the pathway secondary metabolite metabolism; methylglyoxal degradation; (R)-lactate from methylglyoxal: step 2/2. Functionally, thiolesterase that catalyzes the hydrolysis of S-D-lactoyl-glutathione to form glutathione and D-lactic acid. The polypeptide is Hydroxyacylglutathione hydrolase (Rhodospirillum rubrum (strain ATCC 11170 / ATH 1.1.1 / DSM 467 / LMG 4362 / NCIMB 8255 / S1)).